The primary structure comprises 319 residues: Protein HEXIM1 (319 aa).

Residues 1-22 are compositionally biased toward basic and acidic residues; the sequence is MELIKEETAPEDDSRGRQRDCR. Disordered regions lie at residues 1–111, 157–223, 262–286, and 299–319; these read MELI…KKRR, LMEE…LQKD, NNWLRHVRRNPESPADGTGSQRVRE, and NELLLKTPASNEPGLNQSQPS. Residues 24-35 show a composition bias toward polar residues; it reads SVVSSKQVQRNQ. Residues 49–61 show a composition bias toward basic and acidic residues; it reads PMCRDRSDPEPRT. A compositionally biased stretch (basic residues) spans 97–111; it reads GKKKHRRRPSKKKRR. Residues 185–202 are compositionally biased toward acidic residues; sequence TASEDENFEAEEDDEEEG. The span at 203-216 shows a compositional bias: gly residues; sequence GGGSDGMGRPGQAG. The stretch at 240–306 forms a coiled coil; that stretch reads SKQELVREYL…ENNELLLKTP (67 aa). Positions 306–319 are enriched in polar residues; that stretch reads PASNEPGLNQSQPS.

This sequence belongs to the HEXIM family. Homooligomer and heterooligomer. Core component of the 7SK RNP complex.

It is found in the nucleus. It localises to the cytoplasm. Its function is as follows. Transcriptional regulator which functions as a general RNA polymerase II transcription inhibitor. Core component of the 7SK RNP complex: in cooperation with 7SK snRNA sequesters P-TEFb in a large inactive 7SK snRNP complex preventing RNA polymerase II phosphorylation and subsequent transcriptional elongation. Plays a role in the regulation of DNA virus-mediated innate immune response by assembling into the HDP-RNP complex, a complex that serves as a platform for IRF3 phosphorylation and subsequent innate immune response activation through the cGAS-STING pathway. The polypeptide is Protein HEXIM1 (hexim1) (Danio rerio (Zebrafish)).